The sequence spans 384 residues: 1-deoxy-D-xylulose 5-phosphate reductoisomerase (384 aa).

Residues T10, G11, S12, I13, K37, and N124 each contribute to the NADPH site. Position 125 (K125) interacts with 1-deoxy-D-xylulose 5-phosphate. E126 lines the NADPH pocket. D150 lines the Mn(2+) pocket. Residues S151, E152, S176, and H199 each contribute to the 1-deoxy-D-xylulose 5-phosphate site. E152 provides a ligand contact to Mn(2+). Residue G205 coordinates NADPH. Positions 212, 217, 218, and 221 each coordinate 1-deoxy-D-xylulose 5-phosphate. Residue E221 coordinates Mn(2+).

It belongs to the DXR family. It depends on Mg(2+) as a cofactor. Mn(2+) serves as cofactor.

It carries out the reaction 2-C-methyl-D-erythritol 4-phosphate + NADP(+) = 1-deoxy-D-xylulose 5-phosphate + NADPH + H(+). Its pathway is isoprenoid biosynthesis; isopentenyl diphosphate biosynthesis via DXP pathway; isopentenyl diphosphate from 1-deoxy-D-xylulose 5-phosphate: step 1/6. Catalyzes the NADPH-dependent rearrangement and reduction of 1-deoxy-D-xylulose-5-phosphate (DXP) to 2-C-methyl-D-erythritol 4-phosphate (MEP). This is 1-deoxy-D-xylulose 5-phosphate reductoisomerase from Clostridium tetani (strain Massachusetts / E88).